Consider the following 310-residue polypeptide: Malate dehydrogenase (310 aa).

NAD(+) contacts are provided by residues 7 to 12 (GAGNVG) and D32. Positions 81 and 87 each coordinate substrate. NAD(+)-binding positions include N94 and 117–119 (VSN). Substrate contacts are provided by N119 and R150. H174 (proton acceptor) is an active-site residue.

It belongs to the LDH/MDH superfamily. MDH type 3 family.

It carries out the reaction (S)-malate + NAD(+) = oxaloacetate + NADH + H(+). In terms of biological role, catalyzes the reversible oxidation of malate to oxaloacetate. In Chlorobium limicola (strain DSM 245 / NBRC 103803 / 6330), this protein is Malate dehydrogenase.